The primary structure comprises 334 residues: Acryloyl-coenzyme A reductase (334 aa).

C38 serves as a coordination point for Zn(2+). NADP(+) is bound at residue Y39. 6 residues coordinate Zn(2+): H60, D90, C93, C96, C104, and C146. NADP(+) is bound by residues 173–176 (SGGV) and 195–197 (TTS).

The protein belongs to the zinc-containing alcohol dehydrogenase family. As to quaternary structure, monomer. Zn(2+) is required as a cofactor.

The enzyme catalyses propanoyl-CoA + NADP(+) = acryloyl-CoA + NADPH + H(+). Plays a role in autotrophic carbon fixation via the 3-hydroxypropionate/4-hydroxybutyrate cycle. Catalyzes the acryloyl-CoA dependent NADPH oxidation and formation of propionyl-CoA. Inactive towards 3-hydroxypropionyl-CoA, NADH and crotonyl-CoA. This chain is Acryloyl-coenzyme A reductase, found in Sulfurisphaera tokodaii (strain DSM 16993 / JCM 10545 / NBRC 100140 / 7) (Sulfolobus tokodaii).